The primary structure comprises 455 residues: tRNA modification GTPase MnmE (455 aa).

(6S)-5-formyl-5,6,7,8-tetrahydrofolate is bound by residues R24, E81, and K120. In terms of domain architecture, TrmE-type G spans 216-378 (GMTVVIAGRP…LREHLKACMG (163 aa)). Residue N226 coordinates K(+). GTP-binding positions include 226–231 (NAGKSS), 245–251 (TDIAGTT), 270–273 (DTAG), 335–338 (NKAD), and 359–361 (SAR). S230 contributes to the Mg(2+) binding site. Positions 245, 247, and 250 each coordinate K(+). T251 contributes to the Mg(2+) binding site. Residue K455 participates in (6S)-5-formyl-5,6,7,8-tetrahydrofolate binding.

The protein belongs to the TRAFAC class TrmE-Era-EngA-EngB-Septin-like GTPase superfamily. TrmE GTPase family. As to quaternary structure, homodimer. Heterotetramer of two MnmE and two MnmG subunits. It depends on K(+) as a cofactor.

It localises to the cytoplasm. In terms of biological role, exhibits a very high intrinsic GTPase hydrolysis rate. Involved in the addition of a carboxymethylaminomethyl (cmnm) group at the wobble position (U34) of certain tRNAs, forming tRNA-cmnm(5)s(2)U34. This Pseudomonas aeruginosa (strain UCBPP-PA14) protein is tRNA modification GTPase MnmE.